The sequence spans 324 residues: MLALGIEGTAHTLGIGIVSEDKVLANVFDTLTTEKGGIHPKEAAEHHARLMKPLLRKALSEAGVSLDDIDVIAFSQGPGLGPALRVVATAARALAVKYRKPIVGVNHCIAHVEITKMFGVKDPVGLYVSGGNTQVLALEGGRYRVFGETLDIGIGNAIDVFARELGLGFPGGPKVEKLAEKGEKYIELPYAVKGMDLSFSGLLTEAIRKYRSGKYRVEDLAYSFQETAFAALVEVTERAVAHTEKDEVVLVGGVAANNRLREMLRIMTEDRGIKFFVPPYDLCRDNGAMIAYTGLRMYKAGISFRLEETIVKQKFRTDEVEIVW.

Fe cation-binding residues include His107, His111, and Tyr127. Residues 127 to 131, Asp159, Gly172, Glu176, and Asn257 contribute to the substrate site; that span reads YVSGG. Residue Asp285 participates in Fe cation binding.

It belongs to the KAE1 / TsaD family. Monomer. Component of the KEOPS complex that consists of Kae1, Bud32, Cgi121 and Pcc1; the whole complex dimerizes. It depends on Fe(2+) as a cofactor.

It is found in the cytoplasm. It catalyses the reaction L-threonylcarbamoyladenylate + adenosine(37) in tRNA = N(6)-L-threonylcarbamoyladenosine(37) in tRNA + AMP + H(+). In terms of biological role, required for the formation of a threonylcarbamoyl group on adenosine at position 37 (t(6)A37) in tRNAs that read codons beginning with adenine. Is a component of the KEOPS complex that is probably involved in the transfer of the threonylcarbamoyl moiety of threonylcarbamoyl-AMP (TC-AMP) to the N6 group of A37. Kae1 likely plays a direct catalytic role in this reaction, but requires other protein(s) of the complex to fulfill this activity. In vitro, binds tRNA, ssRNA, both single- and double-stranded DNA, and exhibits a low ATPase activity. This chain is tRNA N6-adenosine threonylcarbamoyltransferase, found in Pyrococcus abyssi (strain GE5 / Orsay).